The primary structure comprises 198 residues: Recombination protein RecR (198 aa).

A C4-type zinc finger spans residues 57–72 (CEKCNTFTEAQICEVC). Residues 80 to 175 (TLLCVVETPA…AVTRLARGVP (96 aa)) form the Toprim domain.

Belongs to the RecR family.

May play a role in DNA repair. It seems to be involved in an RecBC-independent recombinational process of DNA repair. It may act with RecF and RecO. This Burkholderia vietnamiensis (strain G4 / LMG 22486) (Burkholderia cepacia (strain R1808)) protein is Recombination protein RecR.